We begin with the raw amino-acid sequence, 277 residues long: Phosphoenolpyruvate synthase regulatory protein (277 aa).

Gly-157–Thr-164 serves as a coordination point for ADP.

Belongs to the pyruvate, phosphate/water dikinase regulatory protein family. PSRP subfamily.

The enzyme catalyses [pyruvate, water dikinase] + ADP = [pyruvate, water dikinase]-phosphate + AMP + H(+). The catalysed reaction is [pyruvate, water dikinase]-phosphate + phosphate + H(+) = [pyruvate, water dikinase] + diphosphate. In terms of biological role, bifunctional serine/threonine kinase and phosphorylase involved in the regulation of the phosphoenolpyruvate synthase (PEPS) by catalyzing its phosphorylation/dephosphorylation. The polypeptide is Phosphoenolpyruvate synthase regulatory protein (Salmonella agona (strain SL483)).